The chain runs to 66 residues: Large ribosomal subunit protein bL35 (66 aa).

The protein belongs to the bacterial ribosomal protein bL35 family.

This chain is Large ribosomal subunit protein bL35, found in Borreliella burgdorferi (strain ATCC 35210 / DSM 4680 / CIP 102532 / B31) (Borrelia burgdorferi).